The following is a 638-amino-acid chain: Factor of DNA methylation 3 (638 aa).

Residues 318-497 (FNRIFADHEK…RALISNLRDM (180 aa)) are a coiled coil.

In terms of biological role, acts in association with FDM4 and FDM5 for RNA-directed DNA methylation (RdDM). This is Factor of DNA methylation 3 from Arabidopsis thaliana (Mouse-ear cress).